The sequence spans 75 residues: MAIFKSISSISNSTGSMGSSIGTSNIVELTGNNNSISCFDGGYGGFNGLSGCGGSNANIINIDIDIGRRRRHRCC.

Positions 1–20 (MAIFKSISSISNSTGSMGSS) are disordered.

This sequence belongs to the UPF0512 family.

In Dictyostelium discoideum (Social amoeba), this protein is UPF0512 protein D.